The chain runs to 131 residues: uncharacterized protein (131 aa).

An N-terminal signal peptide occupies residues M1–G16.

The protein localises to the secreted. This is an uncharacterized protein from Homo sapiens (Human).